A 242-amino-acid chain; its full sequence is 1-(5-phosphoribosyl)-5-[(5-phosphoribosylamino)methylideneamino] imidazole-4-carboxamide isomerase (242 aa).

D8 serves as the catalytic Proton acceptor. The active-site Proton donor is the D129.

It belongs to the HisA/HisF family.

The protein localises to the cytoplasm. The enzyme catalyses 1-(5-phospho-beta-D-ribosyl)-5-[(5-phospho-beta-D-ribosylamino)methylideneamino]imidazole-4-carboxamide = 5-[(5-phospho-1-deoxy-D-ribulos-1-ylimino)methylamino]-1-(5-phospho-beta-D-ribosyl)imidazole-4-carboxamide. Its pathway is amino-acid biosynthesis; L-histidine biosynthesis; L-histidine from 5-phospho-alpha-D-ribose 1-diphosphate: step 4/9. The chain is 1-(5-phosphoribosyl)-5-[(5-phosphoribosylamino)methylideneamino] imidazole-4-carboxamide isomerase from Clostridium botulinum (strain ATCC 19397 / Type A).